The chain runs to 207 residues: uncharacterized protein (207 aa).

This sequence to M.leprae ML1660.

This is an uncharacterized protein from Mycobacterium tuberculosis (strain CDC 1551 / Oshkosh).